A 155-amino-acid chain; its full sequence is Cyclic pyranopterin monophosphate synthase (155 aa).

Residues 75–77 (LCH) and 111–112 (ME) each bind substrate. Residue aspartate 126 is part of the active site.

Belongs to the MoaC family. As to quaternary structure, homohexamer; trimer of dimers.

It carries out the reaction (8S)-3',8-cyclo-7,8-dihydroguanosine 5'-triphosphate = cyclic pyranopterin phosphate + diphosphate. The protein operates within cofactor biosynthesis; molybdopterin biosynthesis. Its function is as follows. Catalyzes the conversion of (8S)-3',8-cyclo-7,8-dihydroguanosine 5'-triphosphate to cyclic pyranopterin monophosphate (cPMP). This is Cyclic pyranopterin monophosphate synthase from Corynebacterium efficiens (strain DSM 44549 / YS-314 / AJ 12310 / JCM 11189 / NBRC 100395).